An 821-amino-acid polypeptide reads, in one-letter code: Probable phosphoenolpyruvate synthase (821 aa).

H444 functions as the Tele-phosphohistidine intermediate in the catalytic mechanism. Substrate contacts are provided by R543, R590, E687, G709, T710, N711, and D712. E687 is a binding site for Mg(2+). D712 contributes to the Mg(2+) binding site. C759 acts as the Proton donor in catalysis.

Belongs to the PEP-utilizing enzyme family. The cofactor is Mg(2+).

It carries out the reaction pyruvate + ATP + H2O = phosphoenolpyruvate + AMP + phosphate + 2 H(+). The protein operates within carbohydrate biosynthesis; gluconeogenesis. Its function is as follows. Catalyzes the phosphorylation of pyruvate to phosphoenolpyruvate. This Pyrococcus horikoshii (strain ATCC 700860 / DSM 12428 / JCM 9974 / NBRC 100139 / OT-3) protein is Probable phosphoenolpyruvate synthase (ppsA).